Reading from the N-terminus, the 1007-residue chain is Sal-like protein 2 (1007 aa).

Residues 1 to 33 are disordered; the sequence is MSRRKQRKPQQLISDCEGPSASENGDASEEDHP. The C2H2-type 1; atypical zinc finger occupies 34-56; it reads QVCAKCCAQFTDPTEFLAHQNAC. 4 disordered regions span residues 59–121, 137–177, 220–243, and 286–306; these read DPPV…GEES, GGGL…SGHL, PASP…PLFS, and PFSA…SPAL. The span at 70 to 80 shows a compositional bias: low complexity; that stretch reads ENPNNSSASSE. Positions 99 to 108 are enriched in polar residues; the sequence is PPDSGSSVPT. Positions 151-171 are enriched in pro residues; that stretch reads PLPPESTPAPPPPPPPPPPPG. Position 243 is a phosphoserine (Ser-243). C2H2-type zinc fingers lie at residues 373-395 and 401-423; these read HKCR…LRSH and YKCN…FHRH. Disordered regions lie at residues 520-540 and 610-629; these read KNKA…SGVA and AASG…ASSG. 3 C2H2-type zinc fingers span residues 631-653, 659-681, and 691-713; these read NQCV…YGQH, FKCK…FVGH, and NSCP…VRMH. A disordered region spans residues 714–886; sequence LGGQIPNGGT…SALTPEGEAT (173 aa). The span at 734–744 shows a compositional bias: polar residues; sequence ENGSEQSTVSG. The span at 747-757 shows a compositional bias: low complexity; that stretch reads SFPQQQSQQPS. The segment covering 758–782 has biased composition (acidic residues); sequence PEEELSEEEEEEDEEEEEDVTDEDS. Residues Ser-797, Ser-802, and Ser-806 each carry the phosphoserine modification. Acidic residues predominate over residues 803 to 812; that stretch reads EEASGAEEEV. Basic and acidic residues predominate over residues 862-871; that stretch reads GKEEGGKPER. Lys-911 participates in a covalent cross-link: Glycyl lysine isopeptide (Lys-Gly) (interchain with G-Cter in ubiquitin). 2 C2H2-type zinc fingers span residues 911 to 933 and 940 to 963; these read KACE…QKTH and FTCV…LLAH.

This sequence belongs to the sal C2H2-type zinc-finger protein family. As to expression, highest levels in adult brain (in different areas). Lower levels in heart; very low levels in kidney and pancreas. Expressed throughout the retina and lens vesicle as well as the periocular mesenchyme.

The protein resides in the nucleus. In terms of biological role, probable transcription factor that plays a role in eye development before, during, and after optic fissure closure. The sequence is that of Sal-like protein 2 (SALL2) from Homo sapiens (Human).